Reading from the N-terminus, the 78-residue chain is Pigment-dispersing hormone peptides (78 aa).

Positions 1–22 (MRSAVIVTMLVVVALAALLTQG) are cleaved as a signal peptide. Position 75 is an alanine amide (A75).

The protein belongs to the arthropod PDH family. Expressed in eyestalk tissue and cerebral ganglia.

It is found in the secreted. Its function is as follows. The pigment-dispersing hormone causes the migration of the distal retinal pigment into the proximal end of the pigment chromatophore cells and thus decreases the amount of light entering the retinulas. May also function as a neurotransmitter and/or neuromodulator. This is Pigment-dispersing hormone peptides from Carcinus maenas (Common shore crab).